The sequence spans 304 residues: N-acetylmuramic acid 6-phosphate etherase (304 aa).

The SIS domain maps to 62-225 (IVQAFQNGGR…TTASMVMIGK (164 aa)). Glu90 serves as the catalytic Proton donor. Residue Glu121 is part of the active site.

This sequence belongs to the GCKR-like family. MurNAc-6-P etherase subfamily. In terms of assembly, homodimer.

The catalysed reaction is N-acetyl-D-muramate 6-phosphate + H2O = N-acetyl-D-glucosamine 6-phosphate + (R)-lactate. It functions in the pathway amino-sugar metabolism; 1,6-anhydro-N-acetylmuramate degradation. Its pathway is amino-sugar metabolism; N-acetylmuramate degradation. The protein operates within cell wall biogenesis; peptidoglycan recycling. In terms of biological role, specifically catalyzes the cleavage of the D-lactyl ether substituent of MurNAc 6-phosphate, producing GlcNAc 6-phosphate and D-lactate. Together with AnmK, is also required for the utilization of anhydro-N-acetylmuramic acid (anhMurNAc) either imported from the medium or derived from its own cell wall murein, and thus plays a role in cell wall recycling. The sequence is that of N-acetylmuramic acid 6-phosphate etherase from Actinobacillus pleuropneumoniae serotype 5b (strain L20).